Consider the following 299-residue polypeptide: Phosphate import ATP-binding protein PstB 1 (299 aa).

The segment at 1-51 (MTENEMTSNDSTEPTPTTETAASSPDPSGDPLIEQSIDVEGTDSTAAETGK) is disordered. Residues 10–27 (DSTEPTPTTETAASSPDP) show a composition bias toward low complexity. The ABC transporter domain occupies 54–294 (IESSDLNVFY…PESQRVEDYI (241 aa)). 86-93 (GPSGCGKS) provides a ligand contact to ATP.

Belongs to the ABC transporter superfamily. Phosphate importer (TC 3.A.1.7) family. The complex is composed of two ATP-binding proteins (PstB), two transmembrane proteins (PstC and PstA) and a solute-binding protein (PstS).

The protein localises to the cell membrane. The catalysed reaction is phosphate(out) + ATP + H2O = ADP + 2 phosphate(in) + H(+). In terms of biological role, part of the ABC transporter complex PstSACB involved in phosphate import. Responsible for energy coupling to the transport system. The protein is Phosphate import ATP-binding protein PstB 1 of Haloarcula marismortui (strain ATCC 43049 / DSM 3752 / JCM 8966 / VKM B-1809) (Halobacterium marismortui).